A 134-amino-acid polypeptide reads, in one-letter code: Replication enhancer protein (134 aa).

Belongs to the geminiviridae replication enhancer protein family. As to quaternary structure, homooligomer. Interacts with the replication-associated protein (REP). Interacts with host proliferating cell nuclear antigen (PCNA). Interacts with host retinoblastoma-related protein 1 (RBR1), and may thereby deregulate the host cell cycle. Oligomerization and interaction with PCNA are necessary for optimal replication enhancement.

Increases viral DNA accumulation. Enhances infectivity and symptom expression. This Cynanchum acutum (Tomato) protein is Replication enhancer protein.